Consider the following 297-residue polypeptide: NADH-ubiquinone oxidoreductase chain 1 (297 aa).

9 helical membrane-spanning segments follow: residues 1 to 21, 34 to 54, 66 to 86, 99 to 119, 139 to 159, 170 to 190, 206 to 228, 235 to 257, and 277 to 297; these read MKSL…TLAE, PNHV…KLIL, WLFV…WLVI, LSIL…IYTG, VSYE…GATL, GTVL…AALA, LVAG…GEYA, TVLN…IWIR, and LPFL…LDLF.

It belongs to the complex I subunit 1 family.

The protein resides in the mitochondrion inner membrane. The enzyme catalyses a ubiquinone + NADH + 5 H(+)(in) = a ubiquinol + NAD(+) + 4 H(+)(out). Its function is as follows. Core subunit of the mitochondrial membrane respiratory chain NADH dehydrogenase (Complex I) that is believed to belong to the minimal assembly required for catalysis. Complex I functions in the transfer of electrons from NADH to the respiratory chain. The immediate electron acceptor for the enzyme is believed to be ubiquinone. In Hyaloraphidium curvatum (Lower fungus), this protein is NADH-ubiquinone oxidoreductase chain 1.